A 116-amino-acid polypeptide reads, in one-letter code: Large ribosomal subunit protein bL19 (116 aa).

This sequence belongs to the bacterial ribosomal protein bL19 family.

Functionally, this protein is located at the 30S-50S ribosomal subunit interface and may play a role in the structure and function of the aminoacyl-tRNA binding site. The protein is Large ribosomal subunit protein bL19 of Clostridium novyi (strain NT).